We begin with the raw amino-acid sequence, 467 residues long: MLPVRESLQKQVKILIGLGNLGFGGYRGLYTRFTNPNGFLEPASSDLLLINERRNLSVIGAVSRTFSVPSVSGPAFQVCGYHIDLLLSDPCKSMASLGSKSLFVDRHSASLVSKRFTGGMVSGDGPNRGRISMRLRGKDHNEKSTICAYFAYRGAKRWIYLNQQRRGMGFRGLHSSLSNRLSAGNAPDVSLDNSVTDEQVRDSSDSVAAKLCTKPLKLVSGSCYLPHPDKEATGGEDAHFICAEEQALGVADGVGGWAELGIDAGYYSRELMSNSVNAIQDEPKGSIDPARVLEKAHTCTKSQGSSTACIIALTNQGLHAINLGDSGFMVVREGHTVFRSPVQQHDFNFTYQLESGRNGDLPSSGQVFTVAVAPGDVIIAGTDGLFDNLYNNEITAIVVHAVRANIDPQVTAQKIAALARQRAQDKNRQTPFSTAAQDAGFRYYGGKLDDITVVVSYVAASKEEGKH.

A PPM-type phosphatase domain is found at 222–458 (SCYLPHPDKE…DDITVVVSYV (237 aa)). Mn(2+) is bound by residues Asp-252, Gly-253, Asp-383, and Asp-449.

This sequence belongs to the PP2C family. Mg(2+) is required as a cofactor. Requires Mn(2+) as cofactor.

It catalyses the reaction O-phospho-L-seryl-[protein] + H2O = L-seryl-[protein] + phosphate. The catalysed reaction is O-phospho-L-threonyl-[protein] + H2O = L-threonyl-[protein] + phosphate. The polypeptide is Probable protein phosphatase 2C 55 (Arabidopsis thaliana (Mouse-ear cress)).